Reading from the N-terminus, the 163-residue chain is NADH-quinone oxidoreductase subunit J (163 aa).

The next 5 membrane-spanning stretches (helical) occupy residues 1–21 (MEFV…LVII), 30–50 (LYLI…GAFF), 54–74 (LEVV…IMML), 94–114 (IGPS…IFFV), and 138–158 (LLLV…VFHI).

It belongs to the complex I subunit 6 family. As to quaternary structure, composed of 13 different subunits. Subunits NuoA, H, J, K, L, M, N constitute the membrane sector of the complex.

Its subcellular location is the cell membrane. The enzyme catalyses a quinone + NADH + 5 H(+)(in) = a quinol + NAD(+) + 4 H(+)(out). Functionally, NDH-1 shuttles electrons from NADH, via FMN and iron-sulfur (Fe-S) centers, to quinones in the respiratory chain. Couples the redox reaction to proton translocation (for every two electrons transferred, four hydrogen ions are translocated across the cytoplasmic membrane), and thus conserves the redox energy in a proton gradient. The sequence is that of NADH-quinone oxidoreductase subunit J (nuoJ) from Buchnera aphidicola subsp. Schizaphis graminum (strain Sg).